The primary structure comprises 182 residues: uncharacterized protein (182 aa).

The protein to H.pylori HP0274.

This is an uncharacterized protein from Methanocaldococcus jannaschii (strain ATCC 43067 / DSM 2661 / JAL-1 / JCM 10045 / NBRC 100440) (Methanococcus jannaschii).